The following is a 261-amino-acid chain: MARLVFSLNLPSSHGFNLSPRNLQSFFVTQTGAPRFRAVRCKPNPESSETKQEKLVIDNGETSSASKEVESSSSVADSSSSSSSGFPESPNKDINRRVAAVTVIAALSLFVSTRLDFGISLKDLTASALPYEEALSNGKPTVVEFYADWCEVCRELAPDVYKIEQQYKDKVNFVMLNVDNTKWEQELDEFGVEGIPHFAFLDREGNEEGNVVGRLPRQYLVENVNALAAGKQSIPYARAVGQYSSSESRKVHQVTDPLSHG.

The N-terminal 40 residues, 1 to 40 (MARLVFSLNLPSSHGFNLSPRNLQSFFVTQTGAPRFRAVR), are a transit peptide targeting the chloroplast. Positions 39–91 (VRCKPNPESSETKQEKLVIDNGETSSASKEVESSSSVADSSSSSSSGFPESPN) are disordered. The segment covering 63–84 (SSASKEVESSSSVADSSSSSSS) has biased composition (low complexity). Residues 101–229 (VTVIAALSLF…LVENVNALAA (129 aa)) enclose the Thioredoxin domain. Residues Cys-150 and Cys-153 each act as nucleophile in the active site. Cysteines 150 and 153 form a disulfide.

Belongs to the thioredoxin family. Interacts in vitro with LTO1.

It localises to the plastid. Its subcellular location is the chloroplast thylakoid membrane. Its function is as follows. Thiol-disulfide oxidoreductase that participates in various redox reactions in the chloroplast. Mediates the reduction of PSI-N in the thylakoid lumen. May interact and probably reduce other target proteins of the thylakoid membrane, such as FTSH2, FTSH8, LHCB5, atpA, atpB, atpE, petA and petC. Involved in the biogenesis of the plastid cytochrome b6f complex. Reducing equivalents are provided by stromal M-type thioredoxins and probably transduced through the thylakoid membrane by CCDA. Possesses low insulin disulfide bonds reducing activity. The chain is Thioredoxin-like protein HCF164, chloroplastic from Arabidopsis thaliana (Mouse-ear cress).